A 178-amino-acid chain; its full sequence is Large ribosomal subunit protein uL6 (178 aa).

This sequence belongs to the universal ribosomal protein uL6 family. In terms of assembly, part of the 50S ribosomal subunit.

Its function is as follows. This protein binds to the 23S rRNA, and is important in its secondary structure. It is located near the subunit interface in the base of the L7/L12 stalk, and near the tRNA binding site of the peptidyltransferase center. The sequence is that of Large ribosomal subunit protein uL6 from Opitutus terrae (strain DSM 11246 / JCM 15787 / PB90-1).